The sequence spans 154 residues: Myoglobin (154 aa).

Positions 2-148 (GLSEGEWQLV…FRKDIATKYK (147 aa)) constitute a Globin domain. Ser-4 bears the Phosphoserine mark. His-65 serves as a coordination point for nitrite. His-65 is a binding site for O2. Residue Thr-68 is modified to Phosphothreonine. His-94 contributes to the heme b binding site.

It belongs to the globin family. As to quaternary structure, monomeric.

It is found in the cytoplasm. It localises to the sarcoplasm. The enzyme catalyses Fe(III)-heme b-[protein] + nitric oxide + H2O = Fe(II)-heme b-[protein] + nitrite + 2 H(+). It catalyses the reaction H2O2 + AH2 = A + 2 H2O. Monomeric heme protein which primary function is to store oxygen and facilitate its diffusion within muscle tissues. Reversibly binds oxygen through a pentacoordinated heme iron and enables its timely and efficient release as needed during periods of heightened demand. Depending on the oxidative conditions of tissues and cells, and in addition to its ability to bind oxygen, it also has a nitrite reductase activity whereby it regulates the production of bioactive nitric oxide. Under stress conditions, like hypoxia and anoxia, it also protects cells against reactive oxygen species thanks to its pseudoperoxidase activity. In Phocoenoides dalli dalli (Dall's porpoise), this protein is Myoglobin (MB).